We begin with the raw amino-acid sequence, 108 residues long: UPF0060 membrane protein YnfA (108 aa).

At 1–5 (MIKTT) the chain is on the periplasmic side. The chain crosses the membrane as a helical span at residues 6–26 (LLFFATALCEIIGCFLPWLWL). At 27 to 30 (KRNA) the chain is on the cytoplasmic side. The chain crosses the membrane as a helical span at residues 31–51 (SIWLLLPAGISLALFVWLLTL). The Periplasmic segment spans residues 52-60 (HPAASGRIY). A helical membrane pass occupies residues 61 to 81 (AAYGGVYVCTALMWLRVVDGV). Topologically, residues 82-84 (KLT) are cytoplasmic. Residues 85–105 (LYDWTGALIALCGMLIIVAGW) traverse the membrane as a helical segment. Topologically, residues 106-108 (GRT) are periplasmic.

Belongs to the UPF0060 family.

Its subcellular location is the cell inner membrane. In Shigella dysenteriae serotype 1 (strain Sd197), this protein is UPF0060 membrane protein YnfA.